The primary structure comprises 431 residues: L-lysine N6-monooxygenase MbtG (431 aa).

A signal peptide spans 1-21; the sequence is MNPTLAVLGAGAKAVAVAAKA.

It belongs to the lysine N(6)-hydroxylase/L-ornithine N(5)-oxygenase family. FAD serves as cofactor.

It carries out the reaction L-lysine + NADPH + O2 = N(6)-hydroxy-L-lysine + NADP(+) + H2O. It functions in the pathway siderophore biosynthesis; mycobactin biosynthesis. Functionally, flavoprotein monooxygenase required for N-hydroxylation of the two acylated lysine residues during mycobactin assembly, thus producing the hydroxamate groups necessary for iron sequestration. Is also able, but less efficiently, to hydroxylate L-lysine (non acylated) in vitro. This is L-lysine N6-monooxygenase MbtG (mbtG) from Mycobacterium bovis (strain ATCC BAA-935 / AF2122/97).